Reading from the N-terminus, the 320-residue chain is Methenyltetrahydromethanopterin cyclohydrolase (320 aa).

This sequence belongs to the MCH family. As to quaternary structure, homodimer.

The protein localises to the cytoplasm. The catalysed reaction is 5,10-methenyl-5,6,7,8-tetrahydromethanopterin + H2O = N(5)-formyl-5,6,7,8-tetrahydromethanopterin + H(+). Its pathway is one-carbon metabolism; methanogenesis from CO(2); 5,10-methenyl-5,6,7,8-tetrahydromethanopterin from CO(2): step 3/3. In terms of biological role, catalyzes the reversible interconversion of 5-formyl-H(4)MPT to methenyl-H(4)MPT(+). This chain is Methenyltetrahydromethanopterin cyclohydrolase (mch), found in Methanothermobacter marburgensis (strain ATCC BAA-927 / DSM 2133 / JCM 14651 / NBRC 100331 / OCM 82 / Marburg) (Methanobacterium thermoautotrophicum).